Consider the following 174-residue polypeptide: Adenylate kinase (174 aa).

Residues S12–V41 are NMP. Residues T13, R18, G39 to V41, G67 to R70, and Q74 contribute to the AMP site. The tract at residues G104–D141 is LID. Residues R105 and T114–Y115 each bind ATP. AMP contacts are provided by R138 and R149.

It belongs to the adenylate kinase family. As to quaternary structure, monomer.

The protein resides in the cytoplasm. It carries out the reaction AMP + ATP = 2 ADP. It functions in the pathway purine metabolism; AMP biosynthesis via salvage pathway; AMP from ADP: step 1/1. Catalyzes the reversible transfer of the terminal phosphate group between ATP and AMP. Plays an important role in cellular energy homeostasis and in adenine nucleotide metabolism. The sequence is that of Adenylate kinase from Neisseria polysaccharea.